The chain runs to 715 residues: Probable serine/threonine-protein kinase MARK-B (715 aa).

Over residues 24–37 (SCSSNSTTSSSSNS) the composition is skewed to low complexity. The interval 24–65 (SCSSNSTTSSSSNSPKQNKVSPGYRNKPQQQQHKKGHKMGNY) is disordered. Positions 65 to 320 (YLLGKTIGSG…LDEIKTHVWV (256 aa)) constitute a Protein kinase domain. ATP is bound by residues 71-79 (IGSGTSSKV) and Lys-94. The Proton acceptor role is filled by Asp-187. The segment covering 335 to 344 (KVSDRLEKEQ) has biased composition (basic and acidic residues). 2 disordered regions span residues 335 to 399 (KVSD…IPQN) and 446 to 530 (CSAP…HHST). Over residues 345–368 (QQQTPQHQQTQQQLQPQSQLQQHS) the composition is skewed to low complexity. Polar residues predominate over residues 381-399 (IGSNRPLNQSSPNLTIPQN). Low complexity-rich tracts occupy residues 451-478 (SPHS…LSVS) and 487-513 (SSNP…INTS). The segment covering 517–527 (QYHHHHHHQNH) has biased composition (basic residues). Positions 666 to 715 (LCPRNETINFEIEVCKVNGMDMYGIKFKRLSGDAWSYSSSCIKIVESLKL) constitute a KA1 domain.

The protein belongs to the protein kinase superfamily. CAMK Ser/Thr protein kinase family. SNF1 subfamily.

It catalyses the reaction L-seryl-[protein] + ATP = O-phospho-L-seryl-[protein] + ADP + H(+). The enzyme catalyses L-threonyl-[protein] + ATP = O-phospho-L-threonyl-[protein] + ADP + H(+). The polypeptide is Probable serine/threonine-protein kinase MARK-B (mrkB) (Dictyostelium discoideum (Social amoeba)).